The chain runs to 329 residues: DNA-directed RNA polymerase subunit alpha (329 aa).

The alpha N-terminal domain (alpha-NTD) stretch occupies residues 1 to 232 (MQEMLEQLLT…YQLIAFVDLK (232 aa)). The segment at 246 to 329 (FDPIFLQPVD…PSSLVSKESA (84 aa)) is alpha C-terminal domain (alpha-CTD).

The protein belongs to the RNA polymerase alpha chain family. In terms of assembly, homodimer. The RNAP catalytic core consists of 2 alpha, 1 beta, 1 beta' and 1 omega subunit. When a sigma factor is associated with the core the holoenzyme is formed, which can initiate transcription.

It carries out the reaction RNA(n) + a ribonucleoside 5'-triphosphate = RNA(n+1) + diphosphate. In terms of biological role, DNA-dependent RNA polymerase catalyzes the transcription of DNA into RNA using the four ribonucleoside triphosphates as substrates. In Hydrogenovibrio crunogenus (strain DSM 25203 / XCL-2) (Thiomicrospira crunogena), this protein is DNA-directed RNA polymerase subunit alpha.